The chain runs to 597 residues: Large ribosomal subunit assembly factor BipA (597 aa).

The tr-type G domain occupies 3-198 (LPIRNVAIIA…AILHHVPPPA (196 aa)). Residues 15 to 20 (DHGKTT) and 128 to 131 (NKID) contribute to the GTP site.

Belongs to the TRAFAC class translation factor GTPase superfamily. Classic translation factor GTPase family. BipA subfamily. As to quaternary structure, monomer.

It is found in the cytoplasm. The enzyme catalyses GTP + H2O = GDP + phosphate + H(+). Functionally, a 50S ribosomal subunit assembly protein with GTPase activity, required for 50S subunit assembly at low temperatures, may also play a role in translation. Binds GTP and analogs. Binds the 70S ribosome between the 30S and 50S subunits, in a similar position as ribosome-bound EF-G; it contacts a number of ribosomal proteins, both rRNAs and the A-site tRNA. The polypeptide is Large ribosomal subunit assembly factor BipA (Synechocystis sp. (strain ATCC 27184 / PCC 6803 / Kazusa)).